The sequence spans 251 residues: Triosephosphate isomerase (251 aa).

Substrate is bound at residue 9–11 (NWK). The Electrophile role is filled by His95. The Proton acceptor role is filled by Glu167. Substrate contacts are provided by residues Gly173, Ser212, and 233–234 (GG).

This sequence belongs to the triosephosphate isomerase family. Homodimer.

It is found in the cytoplasm. It catalyses the reaction D-glyceraldehyde 3-phosphate = dihydroxyacetone phosphate. It functions in the pathway carbohydrate biosynthesis; gluconeogenesis. It participates in carbohydrate degradation; glycolysis; D-glyceraldehyde 3-phosphate from glycerone phosphate: step 1/1. Functionally, involved in the gluconeogenesis. Catalyzes stereospecifically the conversion of dihydroxyacetone phosphate (DHAP) to D-glyceraldehyde-3-phosphate (G3P). This Ectopseudomonas mendocina (strain ymp) (Pseudomonas mendocina) protein is Triosephosphate isomerase.